The following is a 555-amino-acid chain: MAEPEVIHSWSAPRSLSTSLMYSFAQRLDTEVVDEPLYASFLKATGFDRPYRDEVLSKMECNGEKVVKDVIYGSGSKKYRYCKHISKQRLFGLPSELMSRGKHFILIRNPLNILPSFEKVHPPSFLELGLGELVSIYSDLCQMGTPPAVIDADELQRDPETTLRGLCDDLEIPFQASMLKWKAGPIPEDGVWAPWWYKSVHESTGFSSPKKYPRTFPLSHYDLLERSLPLYNILRSHVKHSSSLLSSPLPPPSLPVPENAKLLAWVGDEILPREMAKVSVFDSVVQGGDSVWEGLRIYKGKIFKLEEHLDRLFDSAKALAFDNVPAREEVKEAIFRTLITNGMFDNTHIRLSLTRGKKVTSGMSPAYNRYGCTLIVLAEWKPPVYDNEGGIVLVTATTRRNSPNNLDSKIHHNNLLNNILAKIESNNTNAADAIMLDKDGYVSETNATNIFMVKKGCVLTPHADYCLPGITRATVMELVVKENFILEERRISLSEFHTANEVWTTGTMGELSPVVKIDGRVIGDGKVGPVTRTLQNAYKKLTEDSGVPIPTYQEP.

It belongs to the class-IV pyridoxal-phosphate-dependent aminotransferase family.

The sequence is that of Branched-chain-amino-acid aminotransferase-like protein 1 from Arabidopsis thaliana (Mouse-ear cress).